The primary structure comprises 366 residues: Beta sliding clamp (366 aa).

The protein belongs to the beta sliding clamp family. In terms of assembly, forms a ring-shaped head-to-tail homodimer around DNA which binds and tethers DNA polymerases and other proteins to the DNA. The DNA replisome complex has a single clamp-loading complex (3 tau and 1 each of delta, delta', psi and chi subunits) which binds 3 Pol III cores (1 core on the leading strand and 2 on the lagging strand) each with a beta sliding clamp dimer. Additional proteins in the replisome are other copies of gamma, psi and chi, Ssb, DNA helicase and RNA primase.

Its subcellular location is the cytoplasm. Confers DNA tethering and processivity to DNA polymerases and other proteins. Acts as a clamp, forming a ring around DNA (a reaction catalyzed by the clamp-loading complex) which diffuses in an ATP-independent manner freely and bidirectionally along dsDNA. Initially characterized for its ability to contact the catalytic subunit of DNA polymerase III (Pol III), a complex, multichain enzyme responsible for most of the replicative synthesis in bacteria; Pol III exhibits 3'-5' exonuclease proofreading activity. The beta chain is required for initiation of replication as well as for processivity of DNA replication. The sequence is that of Beta sliding clamp (dnaN) from Haemophilus influenzae (strain ATCC 51907 / DSM 11121 / KW20 / Rd).